Consider the following 747-residue polypeptide: Histone-lysine N-methyltransferase EZH1 (747 aa).

Positions 188 to 231 (DEEEDGHNDPSDGKQDDSKEDLPVTRKRKRHAIEGNKKSSKKQF) are disordered. Over residues 194–211 (HNDPSDGKQDDSKEDLPV) the composition is skewed to basic and acidic residues. A Glycyl lysine isopeptide (Lys-Gly) (interchain with G-Cter in SUMO2) cross-link involves residue K327. The disordered stretch occupies residues 368–414 (VSASCSNASASAMAETKEGDSDRDTGNDWASSSSEANSRCQTPTKQK). The span at 369-381 (SASCSNASASAMA) shows a compositional bias: low complexity. Over residues 382-393 (ETKEGDSDRDTG) the composition is skewed to basic and acidic residues. Positions 395-414 (DWASSSSEANSRCQTPTKQK) are enriched in polar residues. The Nuclear localization signal motif lies at 491 to 496 (QKKKRK). Residues 504–606 (CRKIQLKKDN…CKVVSCKNCS (103 aa)) enclose the CXC domain. The 116-residue stretch at 613-728 (KHLLLAPSDV…AGEELFFDYR (116 aa)) folds into the SET domain.

It belongs to the class V-like SAM-binding methyltransferase superfamily. Histone-lysine methyltransferase family. EZ subfamily. In terms of assembly, component of the PRC2/EED-EZH1 complex, which includes EED, EZH1, SUZ12, RBBP4 and AEBP2. The PRC2/EED-EZH1 is less abundant than the PRC2/EED-EZH2 complex, has weak methyltransferase activity and compacts chromatin in the absence of the methyltransferase cofactor S-adenosyl-L-methionine (SAM). Interacts with EZHIP; the interaction blocks EZH1 methyltransferase activity. Expressed at high levels in kidney, adrenal gland, testis and brain.

The protein localises to the nucleus. It catalyses the reaction L-lysyl(27)-[histone H3] + 3 S-adenosyl-L-methionine = N(6),N(6),N(6)-trimethyl-L-lysyl(27)-[histone H3] + 3 S-adenosyl-L-homocysteine + 3 H(+). Its function is as follows. Polycomb group (PcG) protein. Catalytic subunit of the PRC2/EED-EZH1 complex, which methylates 'Lys-27' of histone H3, leading to transcriptional repression of the affected target gene. Able to mono-, di- and trimethylate 'Lys-27' of histone H3 to form H3K27me1, H3K27me2 and H3K27me3, respectively. Required for embryonic stem cell derivation and self-renewal, suggesting that it is involved in safeguarding embryonic stem cell identity. Compared to EZH2-containing complexes, it is less abundant in embryonic stem cells, has weak methyltransferase activity and plays a less critical role in forming H3K27me3, which is required for embryonic stem cell identity and proper differentiation. In Mus musculus (Mouse), this protein is Histone-lysine N-methyltransferase EZH1 (Ezh1).